Here is a 487-residue protein sequence, read N- to C-terminus: N-succinylglutamate 5-semialdehyde dehydrogenase (487 aa).

221–226 (GSSRTG) contacts NAD(+). Residues Glu-244 and Cys-278 contribute to the active site.

This sequence belongs to the aldehyde dehydrogenase family. AstD subfamily.

The catalysed reaction is N-succinyl-L-glutamate 5-semialdehyde + NAD(+) + H2O = N-succinyl-L-glutamate + NADH + 2 H(+). It functions in the pathway amino-acid degradation; L-arginine degradation via AST pathway; L-glutamate and succinate from L-arginine: step 4/5. Functionally, catalyzes the NAD-dependent reduction of succinylglutamate semialdehyde into succinylglutamate. This chain is N-succinylglutamate 5-semialdehyde dehydrogenase (astD), found in Pseudomonas aeruginosa (strain ATCC 15692 / DSM 22644 / CIP 104116 / JCM 14847 / LMG 12228 / 1C / PRS 101 / PAO1).